A 424-amino-acid polypeptide reads, in one-letter code: STAM-binding protein (424 aa).

The tract at residues 1–127 (MSDHGDVSLP…YTEYNEEKKK (127 aa)) is interaction with CHMP3. 2 positions are modified to phosphoserine: serine 2 and serine 48. The segment at 227–231 (PAKPP) is interaction with STAM. A phosphoserine mark is found at serine 243, serine 245, and serine 247. One can recognise an MPN domain in the interval 257-388 (VVVPGRLCPQ…LTDHGLEEIS (132 aa)). Zn(2+)-binding residues include histidine 335, histidine 337, aspartate 348, histidine 350, cysteine 390, histidine 396, and histidine 398. Positions 335–348 (HTHPTQTAFLSSVD) match the JAMM motif motif.

Belongs to the peptidase M67C family. As to quaternary structure, interacts with STAM. Interacts with SMAD6 and SMAD7. Interacts with CHMP3; the interaction appears to relieve the autoinhibition of CHMP3. Interacts with SMURF2 and RNF11; this interaction promotes ubiquitination. It depends on Zn(2+) as a cofactor. Post-translationally, phosphorylated after BMP type I receptor activation. Ubiquitinated by SMURF2 in the presence of RNF11. In terms of tissue distribution, ubiquitously expressed.

It is found in the nucleus. Its subcellular location is the membrane. The protein localises to the cytoplasm. It localises to the early endosome. With respect to regulation, inhibited by N-ethylmaleimide. Strongly and specifically inhibited by ubiquitin variants UbV(SP.2) and UbV(SP.3). Also inhibited by UbV(SP.1); an ubiquitin variant that also inhibits STAMBPL1. Its function is as follows. Zinc metalloprotease that specifically cleaves 'Lys-63'-linked polyubiquitin chains. Does not cleave 'Lys-48'-linked polyubiquitin chains. Plays a role in signal transduction for cell growth and MYC induction mediated by IL-2 and GM-CSF. Potentiates BMP (bone morphogenetic protein) signaling by antagonizing the inhibitory action of SMAD6 and SMAD7. Has a key role in regulation of cell surface receptor-mediated endocytosis and ubiquitin-dependent sorting of receptors to lysosomes. Endosomal localization of STAMBP is required for efficient EGFR degradation but not for its internalization. Involved in the negative regulation of PI3K-AKT-mTOR and RAS-MAP signaling pathways. This chain is STAM-binding protein (STAMBP), found in Homo sapiens (Human).